A 347-amino-acid polypeptide reads, in one-letter code: Phosphate acyltransferase (347 aa).

Belongs to the PlsX family. Homodimer. Probably interacts with PlsY.

Its subcellular location is the cytoplasm. The enzyme catalyses a fatty acyl-[ACP] + phosphate = an acyl phosphate + holo-[ACP]. It functions in the pathway lipid metabolism; phospholipid metabolism. In terms of biological role, catalyzes the reversible formation of acyl-phosphate (acyl-PO(4)) from acyl-[acyl-carrier-protein] (acyl-ACP). This enzyme utilizes acyl-ACP as fatty acyl donor, but not acyl-CoA. The chain is Phosphate acyltransferase from Methylobacillus flagellatus (strain ATCC 51484 / DSM 6875 / VKM B-1610 / KT).